We begin with the raw amino-acid sequence, 300 residues long: Merozoite surface protein 2 (300 aa).

The first 20 residues, 1–20 (MKVIKTLSIINFFIFVTFNI), serve as a signal peptide directing secretion. 2 N-linked (GlcNAc...) asparagine glycosylation sites follow: Asn22 and Asn36. The polymorphic region stretch occupies residues 44-226 (EESKPPTGAV…EQTESPELQS (183 aa)). The stretch at 51–58 (GAVAGSGA) is one 1; inverted repeat. The tract at residues 51 to 74 (GAVAGSGAGAGSGAGAVAGSGAGA) is 7 X 8 AA tandem repeats of G-S-G-A-G-A-V-A. 5 consecutive repeat copies span residues 61 to 68 (GSGAGAVA), 69 to 76 (GSGAGAVA), 77 to 84 (GSGAGAVA), 85 to 92 (GSGAGAVA), and 93 to 100 (GSGAGAVA). The 7; inverted repeat unit spans residues 103-110 (GAVAGSGA). The disordered stretch occupies residues 111–261 (GNGANPGADA…DSQKECTDGN (151 aa)). Low complexity predominate over residues 124 to 148 (PSTPATTTTTTTTNDAEASTSTSSE). A compositionally biased stretch (basic and acidic residues) spans 149–165 (NRNHNNAETNPKGKGEV). Polar residues-rich tracts occupy residues 167 to 193 (KPNQANKETQNNSNVQQDSQTKSNVPR) and 200 to 228 (KSPTAQPEQAENSAPTAEQTESPELQSAP). The N-linked (GlcNAc...) asparagine glycan is linked to Asn177. Asn249 carries an N-linked (GlcNAc...) asparagine glycan. A disulfide bond links Cys257 and Cys265. 2 N-linked (GlcNAc...) asparagine glycosylation sites follow: Asn273 and Asn274. Asn274 carries the GPI-anchor amidated asparagine lipid modification. The propeptide at 275–300 (SSNIASINKFVVLISATLVLSFAIFI) is removed in mature form.

The protein localises to the cell membrane. Its function is as follows. May play a role in the merozoite attachment to the erythrocyte. The chain is Merozoite surface protein 2 from Plasmodium falciparum (isolate mad71 / Papua New Guinea).